The following is a 540-amino-acid chain: MNIKKFRILFFFNKKYSYLSTIKLKEFHLNHWEKYNNKLKIMENIPNGKKRQNTYLDGGSDFDVNKKTRLVLLNERGVSGRIPTTANIGEINNKDNVLKTFDVCNSFNSAFENDKSEELETHHDKIVGLKIPTIHDTIKTEKKVIIKKECEIKDVNPNDKIGGSLENDKIEGGLENEKIGGGLENDKKNELPEQVRKNVNVIVTWNMNSITVRYKNKEKWKRFMKFVNEINADVLCFQEVRLPALNISKNESKNVNNKVYGGKKNEGEERNRGSVKNTDQKSLIDYKIVEEILKNDFKEYNGYFSLANIKYSGQLVLVKKSIKVKSVRYNLLFETDPNIHNDEGRIILLEFSNFYLLSTYSPNNGFDQTKFKRRSLFDNQMKEFVLFMKNENKNLIWTGDLNIAPEDVDLSHPIEFRKMKKGNVPKEYIGQPGCTDAERANFKTILKNGDLIDSYRYFENYKIKNDPTYKRKTNINDNIYTWRCPFLIGKSCNRAMRIDHFIVSKNLLNQIENIEIHGYSVFHTNFYGSDHCPVILNMKK.

Mg(2+) is bound by residues Asn206 and Glu239. The disordered stretch occupies residues 256–276 (NNKVYGGKKNEGEERNRGSVK). The segment covering 263 to 276 (KKNEGEERNRGSVK) has biased composition (basic and acidic residues). Mg(2+)-binding residues include Asp400, Asn402, Asp530, and His531. Residue His531 is the Proton acceptor of the active site.

This sequence belongs to the DNA repair enzymes AP/ExoA family. The cofactor is Mg(2+). Mn(2+) is required as a cofactor. In terms of processing, may be proteolytically cleaved.

It localises to the mitochondrion. It catalyses the reaction Exonucleolytic cleavage in the 3'- to 5'-direction to yield nucleoside 5'-phosphates.. Its function is as follows. Multifunctional protein that plays a central role in mitochondrial DNA base excision repair pathway induced by oxidative stress. Has apurinic/apyrimidinic (AP) endonuclease activity towards double-stranded DNA (dsDNA). Has nucleotide incision repair (NIR) activity; acts on dsDNA with oxidized bases thymine glycol and 5,6-dihydro-2'-deoxyuridine. Has 3'-5' exonuclease; can use dsDNA templates with 3'-OH termini including blunt-end, gapped and mismatched 3'-recessed. Has 3'-phosphatase activity; cleaves 3'-phosphate from blunt, recessed and gapped dsDNA templates, followed by 3'-5' exonuclease activity. Has RNase H-like activity; cleaves RNA on 3'-recessed RNA-DNA duplex. Plays a role in merosome infection of host erythrocytes. This is DNA-(apurinic or apyrimidinic site) endonuclease from Plasmodium berghei (strain Anka).